Here is a 1080-residue protein sequence, read N- to C-terminus: Kinesin-like protein KIN-14E (1080 aa).

The interval Met1–Ala35 is disordered. Positions Gln247–Glu355 form a coiled coil. Positions Asn407–Ile729 constitute a Kinesin motor domain. Gly490 to Thr497 lines the ATP pocket. The stretch at Lys736 to Lys893 forms a coiled coil. A compositionally biased stretch (basic and acidic residues) spans Ala960 to Arg970. Residues Ala960–Arg1080 are disordered. Polar residues predominate over residues Ser971–Ile985. Positions Thr1047–Thr1059 are enriched in low complexity.

It belongs to the TRAFAC class myosin-kinesin ATPase superfamily. Kinesin family. KIN-14 subfamily.

The sequence is that of Kinesin-like protein KIN-14E from Oryza sativa subsp. japonica (Rice).